The following is a 679-amino-acid chain: Stress-70 protein, mitochondrial (679 aa).

Residues 1–46 (MISASRAAAARLVGTAASRSPAAARPQDGWNGLSHEAFRFVSRRDY) constitute a mitochondrion transit peptide. The interaction with NFS1 stretch occupies residues 1-432 (MISASRAAAA…IQGGVLAGDV (432 aa)). Positions 63 and 64 each coordinate ADP. Residues 63–431 (TNSCVAVMEG…AIQGGVLAGD (369 aa)) are nucleotide-binding domain (NBD). Residue lysine 76 is modified to N6-acetyllysine. Threonine 87 is modified (phosphothreonine). N6-acetyllysine; alternate is present on residues lysine 135 and lysine 138. 2 positions are modified to N6-succinyllysine; alternate: lysine 135 and lysine 138. Residue lysine 143 is modified to N6-acetyllysine. An N6-acetyllysine; alternate modification is found at lysine 206. N6-succinyllysine; alternate is present on lysine 206. N6-malonyllysine; alternate is present on lysine 206. An N6-acetyllysine mark is found at lysine 234 and lysine 288. Lysine 300 bears the N6-acetyllysine; alternate mark. Lysine 300 carries the N6-succinyllysine; alternate modification. ADP contacts are provided by glutamate 313, lysine 316, and serine 320. An N6-acetyllysine; alternate modification is found at lysine 360. Lysine 360 carries the post-translational modification N6-succinyllysine; alternate. Lysine 368 carries the N6-succinyllysine modification. The ADP site is built by glycine 388 and arginine 391. Lysine 394 is modified (N6-succinyllysine). Serine 408 is modified (phosphoserine). The tract at residues 432–441 (VTDVLLLDVT) is interdomain linker. The interval 432–679 (VTDVLLLDVT…QKEDQKEEKQ (248 aa)) is interaction with FXN and ISCU. A substrate-binding domain (SBD) region spans residues 442–679 (PLSLGIETLG…QKEDQKEEKQ (238 aa)). Arginine 513 carries the post-translational modification Omega-N-methylarginine. N6-acetyllysine; alternate occurs at positions 567 and 600. 2 positions are modified to N6-succinyllysine; alternate: lysine 567 and lysine 600. Lysine 610 carries the post-translational modification N6-succinyllysine. N6-acetyllysine is present on lysine 612. Lysine 646 bears the N6-acetyllysine; alternate mark. Lysine 646 carries the post-translational modification N6-succinyllysine; alternate. The segment at 656-679 (ASEREGSGSSGTGEQKEDQKEEKQ) is disordered. Residues 669-679 (EQKEDQKEEKQ) show a composition bias toward basic and acidic residues.

Belongs to the heat shock protein 70 family. As to quaternary structure, interacts strongly with the intermediate form of FXN and weakly with its mature form. Interacts with HSCB. Associates with the mitochondrial contact site and cristae organizing system (MICOS) complex, composed of at least MICOS10/MIC10, CHCHD3/MIC19, CHCHD6/MIC25, APOOL/MIC27, IMMT/MIC60, APOO/MIC23/MIC26 and QIL1/MIC13. This complex was also known under the names MINOS or MitOS complex. The MICOS complex associates with mitochondrial outer membrane proteins SAMM50, MTX1, MTX2 and DNAJC11, mitochondrial inner membrane protein TMEM11 and with HSPA9. Interacts with DNLZ, the interaction is required to prevent self-aggregation. Interacts with TESPA1. Interacts with PDPN. Interacts with NFU1, NFS1 and ISCU. Interacts with TP53; the interaction promotes TP53 degradation. Interacts (via SBD domain) with UBXN2A; the interaction with UBXN2A inhibits HSPA9/MOT-2 interaction with and degradation of TP53, thereby promotes TP53 translocation to the nucleus. Interacts with ITPR1 AND VDAC1; this interaction couples ITPR1 to VDAC1. Component of the TIM23 mitochondrial inner membrane pre-sequence translocase complex.

The protein resides in the mitochondrion. It is found in the nucleus. It localises to the nucleolus. Its subcellular location is the cytoplasm. The protein localises to the mitochondrion matrix. It carries out the reaction ATP + H2O = ADP + phosphate + H(+). With respect to regulation, the chaperone activity is regulated by ATP-induced allosteric coupling of the nucleotide-binding (NBD) and substrate-binding (SBD) domains. ATP binding in the NBD leads to a conformational change in the NBD, which is transferred through the interdomain linker (IDL) to the substrate-binding domain (SBD). This elicits a reduced substrate affinity and a faster substrate exchange rate. Upon hydrolysis of ATP to ADP, the protein undergoes a conformational change that increases its affinity for substrate proteins. It cycles through repeated phases of ATP hydrolysis and nucleotide exchange, facilitating repeated cycles of substrate binding and release. Functions in collaboration with co-chaperones. Functions with the co-chaperone, DNLZ, to maintain solubility and regulate ATP hydrolysis. Nucleotide exchange factors, GRPEL1 and GRPEL2, accelerate nucleotide exchange. In terms of biological role, mitochondrial chaperone that plays a key role in mitochondrial protein import, folding, and assembly. Plays an essential role in the protein quality control system, the correct folding of proteins, the re-folding of misfolded proteins, and the targeting of proteins for subsequent degradation. These processes are achieved through cycles of ATP binding, ATP hydrolysis, and ADP release, mediated by co-chaperones. In mitochondria, it associates with the TIM (translocase of the inner membrane) protein complex to assist in the import and folding of mitochondrial proteins. Plays an important role in mitochondrial iron-sulfur cluster (ISC) biogenesis. Interacts with and stabilizes ISC cluster assembly proteins FXN, NFU1, NFS1 and ISCU. Regulates erythropoiesis via stabilization of ISC assembly. Regulates mitochondrial calcium-dependent apoptosis by coupling two calcium channels, ITPR1 and VDAC1, at the mitochondria-associated endoplasmic reticulum (ER) membrane to facilitate calcium transport from the ER lumen to the mitochondria intermembrane space, providing calcium for the downstream calcium channel MCU, which releases it into the mitochondrial matrix. Although primarily located in the mitochondria, it is also found in other cellular compartments. In the cytosol, it associates with proteins involved in signaling, apoptosis, or senescence. It may play a role in cell cycle regulation via its interaction with and promotion of degradation of TP53. May play a role in the control of cell proliferation and cellular aging. Protects against reactive oxygen species (ROS). Extracellular HSPA9 plays a cytoprotective role by preventing cell lysis following immune attack by the membrane attack complex by disrupting formation of the complex. In Mus musculus (Mouse), this protein is Stress-70 protein, mitochondrial.